The primary structure comprises 409 residues: MHFIQPLQAFLQTKHIVEFSSIQQAVFKVWPRQNVVGIAETGSGKTFAYLLPALNQIDVTLNKPQAVVFVPTKELKWQILTILNDIKASFTGLKVSENFNSNAHLIVSLIGKDIILHETIKYVVFDEVDMFLEDSSQAEWINCVQLFQKHKPHFGFFSATLFNEQLQQIRKQVAPLTVVNQKKRAWKHSLVKHFLLNLNGQEPFAGLLALLNYHHNEQVLVFCSNAKSLKQLTSLLAHNQLSFKSLHGQLTPNERKHIFTSAANNTVRVLVVSDLLARGIDLPHFSVVISWDLPLVDSFYIHRSGRVARFNSWGNSYVFDLPHNQHKLTKFAHKGILFNSVHLERDGTLKFPQLKQSKQKPAVSSELKTAIKRIKAGYKKVKPNYKKRQKQQIAELFAKRKQRRSWKNF.

Positions 26–179 constitute a Helicase ATP-binding domain; that stretch reads VFKVWPRQNV…RKQVAPLTVV (154 aa). ATP is bound at residue 39 to 46; the sequence is AETGSGKT. The DEVD box signature appears at 126-129; it reads DEVD. Positions 190-349 constitute a Helicase C-terminal domain; it reads LVKHFLLNLN…SVHLERDGTL (160 aa).

This sequence belongs to the DEAD box helicase family.

It carries out the reaction ATP + H2O = ADP + phosphate + H(+). The sequence is that of Probable ATP-dependent RNA helicase MG308 homolog from Mycoplasma pneumoniae (strain ATCC 29342 / M129 / Subtype 1) (Mycoplasmoides pneumoniae).